We begin with the raw amino-acid sequence, 149 residues long: Arginine repressor (149 aa).

It belongs to the ArgR family.

It localises to the cytoplasm. It functions in the pathway amino-acid biosynthesis; L-arginine biosynthesis [regulation]. In terms of biological role, regulates arginine biosynthesis genes. This is Arginine repressor from Alkaliphilus oremlandii (strain OhILAs) (Clostridium oremlandii (strain OhILAs)).